We begin with the raw amino-acid sequence, 444 residues long: Sprouty-related, EVH1 domain-containing protein 1 (444 aa).

Serine 2 is modified (N-acetylserine). The 118-residue stretch at 6–123 (ATSDNDNSYA…RGIRRAIEDI (118 aa)) folds into the WH1 domain. N6-methyllysine is present on lysine 225. Residues 234–286 (SIRHVSFQDEDEIVRINPRDILIRRYADYRHPDMWKNDLERDDTDSSVPFSKQ) form the KBD domain. Serine 239 carries the phosphoserine modification. The disordered stretch occupies residues 268–287 (WKNDLERDDTDSSVPFSKQD). Position 309 is a phosphoserine (serine 309). The tract at residues 333 to 444 (SRCVYCQERF…CCGGKHKAAG (112 aa)) is required for interaction with TESK1. In terms of domain architecture, SPR spans 334–442 (RCVYCQERFN…CGCCGGKHKA (109 aa)).

As to quaternary structure, homodimer and heterodimer. Able to interact with SPRED2 to form heterodimers. Interacts (via C-terminus) with TAOK1/MARKK (via C-terminus); the interaction does not affect TAOK1 kinase activity. Interacts (via C-terminus) with TESK1 (via C-terminus); the interaction inhibits TESK1 kinase activity. Interacts with CAV1. Interacts with RAS. Interacts with palmitoyltransferase ZDHHC17/HIP14; the interaction leads to palmitoylation of SPRED1. Post-translationally, palmitoylated by ZDHHC17/HIP14. In terms of processing, ubiquitinated. Phosphorylated on tyrosine. As to expression, expressed in brain. Weakly expressed in lung, heart, liver, kidney, intestine, spleen, testis, thymus, colon and ovary. Also expressed in embryonic tissues such as heart, lung, liver and brain. Highly expressed in IL3-dependent hematopoietic cell lines (Ba/F3 and MC/9) and bone marrow-derived mast cells (BMMC).

It localises to the cell membrane. The protein resides in the membrane. It is found in the caveola. Its subcellular location is the nucleus. Functionally, tyrosine kinase substrate that inhibits growth-factor-mediated activation of MAP kinase. Negatively regulates hematopoiesis of bone marrow. Inhibits fibroblast growth factor (FGF)-induced retinal lens fiber differentiation, probably by inhibiting FGF-mediated phosphorylation of ERK1/2. Attenuates actin stress fiber formation via inhibition of TESK1-mediated phosphorylation of cofilin. Inhibits TGFB-induced epithelial-to-mesenchymal transition in lens epithelial cells. The sequence is that of Sprouty-related, EVH1 domain-containing protein 1 (Spred1) from Mus musculus (Mouse).